The primary structure comprises 219 residues: Protein RhiB (219 aa).

Residues 174–195 (AGISQQGNAAGTSISSKSTGSP) show a composition bias toward polar residues. A disordered region spans residues 174 to 201 (AGISQQGNAAGTSISSKSTGSPENPART).

Functionally, may be involved in plant-microbe interaction. This Rhizobium leguminosarum bv. viciae protein is Protein RhiB (rhiB).